We begin with the raw amino-acid sequence, 328 residues long: MQNSTTEFLKPRQIDVNTFSATRAKVSMQPFERGFGHTLGNALRRILLSSMNGFAPTEVAIAGVLHEYSTVDGIQEDVVDILLNIKGIVFKLHGRSQVQLVLKKSGSGVVSAGDIELPHDVEILNPGHVICHLADNGQIEMEIKVEQGRGYQSVSGRQVVRDENRQIGAIQLDASFSPISRVSFEVEPARVEQRTDLDKLVLDIETDGSIDPEEAVRSAARILIDQMSIFADLQGTPVEEVEEKAPPIDPVLLRPVDDLELTVRSANCLKAEDIYYIGDLIQRTETELLKTPNLGRKSLNEIKEVLASKGLTLGSKLEAWPPVGLEKP.

The alpha N-terminal domain (alpha-NTD) stretch occupies residues 1–234; that stretch reads MQNSTTEFLK…DQMSIFADLQ (234 aa). The alpha C-terminal domain (alpha-CTD) stretch occupies residues 248-328; the sequence is IDPVLLRPVD…AWPPVGLEKP (81 aa).

Belongs to the RNA polymerase alpha chain family. In terms of assembly, homodimer. The RNAP catalytic core consists of 2 alpha, 1 beta, 1 beta' and 1 omega subunit. When a sigma factor is associated with the core the holoenzyme is formed, which can initiate transcription.

It carries out the reaction RNA(n) + a ribonucleoside 5'-triphosphate = RNA(n+1) + diphosphate. DNA-dependent RNA polymerase catalyzes the transcription of DNA into RNA using the four ribonucleoside triphosphates as substrates. The polypeptide is DNA-directed RNA polymerase subunit alpha (Neisseria meningitidis serogroup A / serotype 4A (strain DSM 15465 / Z2491)).